The sequence spans 532 residues: MGSVPDPGELTELAQPSFEEFQKQTSLMTSCTLLWQELSDHFTSLEQNLMKKSEALKQMIETLDNQTQTSLESLKRREVTIDHSVEIVAGKVGERARAALESLEKARDGCGDGSNDDSGDVDDEEGLLSALKSLCLKMDARGFWNFVTARKKELENLRSKIPAALVDCVDPAMLVLEAISEVFPVDTRGDKVSNDYGWACVVILESLTPVIVDPVIGKSRLLVTPSVKEKAKEIAETWKKSLEERGRIENVKTPDVHTFLQHLVTFGIVKSEDLALYRKLVVGSAWRKQMPKLAVSVGLGDQMPDMIEELISRGQQLDAVHFTYEVGLVDKFPPVPLLKAYLRDAKKSAASIMEDSSNTGRATHLVARKEQSALKAVLKCIEEYKLEEEFPPENLKKRLDQLEKTKTEKRKPAAVPANKRTRASYNGPMPPAKAGRITNAYVSSFPFIRSPSHSPQYASPAAYPSPPTTVYSNRSPPYPYSPEIIPGSYQGSPIGYPAYNGYCNGPVPAPAPPVYHPHHHQHHQFHHQQHYY.

A disordered region spans residues 406–432 (KTEKRKPAAVPANKRTRASYNGPMPPA).

It belongs to the Frigida family. In terms of tissue distribution, expressed in leaves, shoot apex, flowers and during seed development.

In Arabidopsis thaliana (Mouse-ear cress), this protein is FRIGIDA-like protein 4a (FRL4A).